The chain runs to 348 residues: Phosphatidylinositol 3,4,5-trisphosphate 3-phosphatase ptn1 (348 aa).

The Phosphatase tensin-type domain occupies 18–189 (EKVNRSFAYL…YYIEILKQFP (172 aa)). Cys-129 (phosphocysteine intermediate) is an active-site residue.

Its subcellular location is the cytoplasmic vesicle. It carries out the reaction a 1,2-diacyl-sn-glycero-3-phospho-(1D-myo-inositol-3,4,5-trisphosphate) + H2O = a 1,2-diacyl-sn-glycero-3-phospho-(1D-myo-inositol-4,5-bisphosphate) + phosphate. The catalysed reaction is 1,2-dioctanoyl-sn-glycero-3-phospho-(1D-myo-inositol-3,4,5-trisphosphate) + H2O = 1,2-dioctanoyl-sn-glycero-3-phospho-(1D-myo-inositol-4,5-bisphosphate) + phosphate. The enzyme catalyses 1,2-dihexadecanoyl-sn-glycero-3-phospho-(1D-myo-inositol-3,4,5-trisphosphate) + H2O = 1,2-dihexadecanoyl-sn-glycero-3-phospho-(1D-myo-inositol-4,5-bisphosphate) + phosphate. Functionally, acts as a phosphoinositide 3-phosphatase and regulates PtdIns(3,4,5)P3 levels. This chain is Phosphatidylinositol 3,4,5-trisphosphate 3-phosphatase ptn1 (ptn1), found in Schizosaccharomyces pombe (strain 972 / ATCC 24843) (Fission yeast).